Consider the following 1084-residue polypeptide: MSSQSHPDGLSGRDQPVELLNPARVNHMPSTVDVATALPLQVAPSAVPMDLRLDHQFSLPVAEPALREQQLQQELLALKQKQQIQRQILIAEFQRQHEQLSRQHEAQLHEHIKQQQEMLAMKHQQELLEHQRKLERHRQEQELEKQHREQKLQQLKNKEKGKESAVASTEVKMKLQEFVLNKKKALAHRNLNHCISSDPRYWYGKTQHSSLDQSSPPQSGVSTSYNHPVLGMYDAKDDFPLRKTASEPNLKLRSRLKQKVAERRSSPLLRRKDGPVVTALKKRPLDVTDSACSSAPGSGPSSPNNSSGSVSAENGIAPAVPSIPAETSLAHRLVAREGSAAPLPLYTSPSLPNITLGLPATGPSAGTAGQQDAERLTLPALQQRLSLFPGTHLTPYLSTSPLERDGGAAHSPLLQHMVLLEQPPAQAPLVTGLGALPLHAQSLVGADRVSPSIHKLRQHRPLGRTQSAPLPQNAQALQHLVIQQQHQQFLEKHKQQFQQQQLQMNKIIPKPSEPARQPESHPEETEEELREHQALLDEPYLDRLPGQKEAHAQAGVQVKQEPIESDEEEAEPPREVEPGQRQPSEQELLFRQQALLLEQQRIHQLRNYQASMEAAGIPVSFGGHRPLSRAQSSPASATFPVSVQEPPTKPRFTTGLVYDTLMLKHQCTCGSSSSHPEHAGRIQSIWSRLQETGLRGKCECIRGRKATLEELQTVHSEAHTLLYGTNPLNRQKLDSKKLLGSLASVFVRLPCGGVGVDSDTIWNEVHSAGAARLAVGCVVELVFKVATGELKNGFAVVRPPGHHAEESTPMGFCYFNSVAVAAKLLQQRLSVSKILIVDWDVHHGNGTQQAFYSDPSVLYMSLHRYDDGNFFPGSGAPDEVGTGPGVGFNVNMAFTGGLDPPMGDAEYLAAFRTVVMPIASEFAPDVVLVSSGFDAVEGHPTPLGGYNLSARCFGYLTKQLMGLAGGRIVLALEGGHDLTAICDASEACVSALLGNELDPLPEKVLQQRPNANAVRSMEKVMEIHSKYWRCLQRTTSTAGRSLIEAQTCENEEAETVTAMASLSVGVKPAEKRPDEEPMEEEPPL.

Residues 67–177 adopt a coiled-coil conformation; it reads REQQLQQELL…STEVKMKLQE (111 aa). Positions 118 to 313 are interaction with MEF2A; it reads MLAMKHQQEL…NNSSGSVSAE (196 aa). Over residues 133–163 the composition is skewed to basic and acidic residues; it reads KLERHRQEQELEKQHREQKLQQLKNKEKGKE. 3 disordered regions span residues 133 to 166, 206 to 226, and 240 to 315; these read KLER…ESAV, TQHS…TSYN, and PLRK…AENG. Serine 210 bears the Phosphoserine mark. A Phosphoserine; by CaMK4 and SIK1 modification is found at serine 246. Positions 259–274 are enriched in basic and acidic residues; that stretch reads KVAERRSSPLLRRKDG. Low complexity predominate over residues 290-312; it reads SACSSAPGSGPSSPNNSSGSVSA. Residues 349–354 carry the PxLPxI/L motif; mediates interaction with ANKRA2 and 14-3-3 proteins motif; the sequence is PSLPNI. Serine 350 carries the post-translational modification Phosphoserine. Serine 467 bears the Phosphoserine; by CaMK4 and SIK1 mark. Disordered regions lie at residues 509-531, 548-585, and 626-646; these read PKPS…ELRE, KEAH…QPSE, and PLSR…VQEP. Positions 516–531 are enriched in basic and acidic residues; the sequence is RQPESHPEETEEELRE. Lysine 559 participates in a covalent cross-link: Glycyl lysine isopeptide (Lys-Gly) (interchain with G-Cter in SUMO). A Phosphoserine modification is found at serine 565. Positions 629–641 are enriched in polar residues; it reads RAQSSPASATFPV. At serine 632 the chain carries Phosphoserine; by CaMK4. Serine 633 is modified (phosphoserine). Residues 655–1084 are histone deacetylase; that stretch reads GLVYDTLMLK…EEPMEEEPPL (430 aa). Residues cysteine 667, cysteine 669, histidine 675, and cysteine 751 each contribute to the Zn(2+) site. Histidine 803 is a catalytic residue. The Nuclear export signal signature appears at 1051-1084; that stretch reads EEAETVTAMASLSVGVKPAEKRPDEEPMEEEPPL. The tract at residues 1061–1084 is disordered; sequence SLSVGVKPAEKRPDEEPMEEEPPL.

Belongs to the histone deacetylase family. HD type 2 subfamily. In terms of assembly, homodimer. Homodimerization via its N-terminal domain. Interacts with MEF2A. Interacts with MEF2C and MEF2D. Interacts with AHRR. Interacts with NR2C1. Interacts with HDAC7. Interacts with a 14-3-3 chaperone proteins in a phosphorylation dependent manner. Interacts with 14-3-3 protein YWHAB. Interacts with BTBD14B. Interacts with KDM5B. Interacts with MYOCD. Interacts with MORC2. Interacts (via PxLPxI/L motif) with ANKRA2 (via ankyrin repeats). Interacts with CUL7 (as part of the 3M complex); negatively regulated by ANKRA2. Interacts with EP300 in the presence of TFAP2C. Interacts with HSPA1A and HSPA1B leading to their deacetylation at 'Lys-77'. Interacts with ZBTB7B; the interaction allows the recruitment of HDAC4 on CD8 loci for deacetylation and possible inhibition of CD8 genes expression. Interacts with DHX36. Interacts with SIK3; this interaction leads to HDAC4 retention in the cytoplasm. Interacts with ZNF638. Post-translationally, phosphorylated by CaMK4 at Ser-246, Ser-467 and Ser-632. Phosphorylation at other residues by CaMK2D is required for the interaction with 14-3-3. Phosphorylation at Ser-350, within the PxLPxI/L motif, impairs the binding of ANKRA2 but generates a high-affinity docking site for 14-3-3. In terms of processing, sumoylation on Lys-559 is promoted by the E3 SUMO-protein ligase RANBP2, and prevented by phosphorylation by CaMK4. As to expression, ubiquitous.

The protein resides in the nucleus. It localises to the cytoplasm. It catalyses the reaction N(6)-acetyl-L-lysyl-[histone] + H2O = L-lysyl-[histone] + acetate. Functionally, responsible for the deacetylation of lysine residues on the N-terminal part of the core histones (H2A, H2B, H3 and H4). Histone deacetylation gives a tag for epigenetic repression and plays an important role in transcriptional regulation, cell cycle progression and developmental events. Histone deacetylases act via the formation of large multiprotein complexes. Involved in muscle maturation via its interaction with the myocyte enhancer factors such as MEF2A, MEF2C and MEF2D. Involved in the MTA1-mediated epigenetic regulation of ESR1 expression in breast cancer. Deacetylates HSPA1A and HSPA1B at 'Lys-77' leading to their preferential binding to co-chaperone STUB1. This chain is Histone deacetylase 4, found in Homo sapiens (Human).